The chain runs to 873 residues: Probable beta-glucosidase A (873 aa).

The N-terminal stretch at 1 to 19 is a signal peptide; sequence MRFGWLEVAALTAASVANA. N-linked (GlcNAc...) asparagine glycosylation is found at asparagine 71, asparagine 222, and asparagine 263. Aspartate 291 is an active-site residue. 9 N-linked (GlcNAc...) asparagine glycosylation sites follow: asparagine 326, asparagine 333, asparagine 365, asparagine 453, asparagine 534, asparagine 553, asparagine 575, asparagine 679, and asparagine 725. The tract at residues 731–764 is disordered; that stretch reads DSSDDPNYGWEDSEYIPEGARDGSPQPLLKAGGA.

The protein belongs to the glycosyl hydrolase 3 family.

Its subcellular location is the secreted. It catalyses the reaction Hydrolysis of terminal, non-reducing beta-D-glucosyl residues with release of beta-D-glucose.. Its pathway is glycan metabolism; cellulose degradation. In terms of biological role, beta-glucosidases are one of a number of cellulolytic enzymes involved in the degradation of cellulosic biomass. Catalyzes the last step releasing glucose from the inhibitory cellobiose. This chain is Probable beta-glucosidase A (bglA), found in Aspergillus fumigatus (strain CBS 144.89 / FGSC A1163 / CEA10) (Neosartorya fumigata).